A 151-amino-acid polypeptide reads, in one-letter code: Metalloproteinase inhibitor 3 (151 aa).

The 108-residue stretch at 1–108 folds into the NTR domain; the sequence is CNSDIVIRAK…GLNYRYHLGC (108 aa). 3 cysteine pairs are disulfide-bonded: C1-C108, C115-C120, and C128-C149. The interval 53-54 is involved in metalloproteinase-binding; sequence ES. The interval 71-151 is mediates interaction with EFEMP1; that stretch reads GRVYDGKVYT…YQSKHYACIR (81 aa).

Belongs to the protease inhibitor I35 (TIMP) family. As to quaternary structure, interacts with EFEMP1.

The protein resides in the secreted. Its subcellular location is the extracellular space. The protein localises to the extracellular matrix. In terms of biological role, complexes with metalloproteinases (such as collagenases) and irreversibly inactivates them by binding to their catalytic zinc cofactor. May form part of a tissue-specific acute response to remodeling stimuli. The polypeptide is Metalloproteinase inhibitor 3 (TIMP3) (Oryctolagus cuniculus (Rabbit)).